The primary structure comprises 115 residues: Somatostatin-1 (115 aa).

An N-terminal signal peptide occupies residues Met-1–Ala-24. Positions Ala-25–Glu-99 are excised as a propeptide. Residues Ser-60–Asp-79 are disordered. A disulfide bond links Cys-104 and Cys-115.

Belongs to the somatostatin family.

It localises to the secreted. Somatostatin inhibits the release of somatotropin. This is Somatostatin-1 (sst1) from Pelophylax ridibundus (Marsh frog).